A 63-amino-acid polypeptide reads, in one-letter code: Large ribosomal subunit protein bL28 (63 aa).

This sequence belongs to the bacterial ribosomal protein bL28 family.

This Thermomicrobium roseum (strain ATCC 27502 / DSM 5159 / P-2) protein is Large ribosomal subunit protein bL28.